Here is a 515-residue protein sequence, read N- to C-terminus: GMP synthase [glutamine-hydrolyzing] (515 aa).

In terms of domain architecture, Glutamine amidotransferase type-1 spans 6-198 (KVIIIDYGSQ…LFHVAKLKAD (193 aa)). The active-site Nucleophile is C83. Active-site residues include H172 and E174. The GMPS ATP-PPase domain occupies 199–390 (WTMSSFVERA…LGLPDFIIWR (192 aa)). 226–232 (SGGIDST) is an ATP binding site.

In terms of assembly, homodimer.

It carries out the reaction XMP + L-glutamine + ATP + H2O = GMP + L-glutamate + AMP + diphosphate + 2 H(+). It functions in the pathway purine metabolism; GMP biosynthesis; GMP from XMP (L-Gln route): step 1/1. Functionally, catalyzes the synthesis of GMP from XMP. The polypeptide is GMP synthase [glutamine-hydrolyzing] (Nitratidesulfovibrio vulgaris (strain DP4) (Desulfovibrio vulgaris)).